The chain runs to 238 residues: Ribonuclease PH (238 aa).

Residues Arg-86 and 124 to 126 (GTR) contribute to the phosphate site.

This sequence belongs to the RNase PH family. Homohexameric ring arranged as a trimer of dimers.

The catalysed reaction is tRNA(n+1) + phosphate = tRNA(n) + a ribonucleoside 5'-diphosphate. In terms of biological role, phosphorolytic 3'-5' exoribonuclease that plays an important role in tRNA 3'-end maturation. Removes nucleotide residues following the 3'-CCA terminus of tRNAs; can also add nucleotides to the ends of RNA molecules by using nucleoside diphosphates as substrates, but this may not be physiologically important. Probably plays a role in initiation of 16S rRNA degradation (leading to ribosome degradation) during starvation. In Hahella chejuensis (strain KCTC 2396), this protein is Ribonuclease PH.